We begin with the raw amino-acid sequence, 352 residues long: B1 bradykinin receptor (352 aa).

Topologically, residues 1 to 41 (MASWPPLELQSSNQSQLFPQNATACDNAPEAWDLLHRVLPT) are extracellular. Asn13 and Asn21 each carry an N-linked (GlcNAc...) asparagine glycan. A helical transmembrane segment spans residues 42-62 (FIISICSFGLLGNLFVLLVFL). The Cytoplasmic segment spans residues 63-72 (LPRRRLNVAE). The chain crosses the membrane as a helical span at residues 73–93 (IYLANLAASDLVFVLGLPFWA). Topologically, residues 94 to 110 (ENIWNQFNWPFGALLCR) are extracellular. Cys109 and Cys188 are oxidised to a cystine. The helical transmembrane segment at 111 to 131 (GINGVIKANLFISIFLVVAIS) threads the bilayer. The Cytoplasmic segment spans residues 132–153 (QDRYCLLVHPMASRRRQRRRQA). A helical membrane pass occupies residues 154–174 (RVTCVLIWVVGGLLSIPTFLL). Topologically, residues 175–206 (RSIQAVPDLNITACILLLPHEAWHFARIVELN) are extracellular. A glycan (N-linked (GlcNAc...) asparagine) is linked at Asn184. The helical transmembrane segment at 207-227 (ILAFLLPLAAIVFFNYHILAS) threads the bilayer. The Cytoplasmic portion of the chain corresponds to 228–250 (LRGREEVSRTRCGGRKDSKTTAL). The helical transmembrane segment at 251-271 (ILTLVVAFLVCWAPYHFFAFL) threads the bilayer. Residues 272-294 (EFLFQVQAIRSCFWEDFIDLGLQ) lie on the Extracellular side of the membrane. A helical transmembrane segment spans residues 295 to 315 (LANFLAFTNSSLNPVIYVFVG). Over 316-352 (RLFRTKVWELYKQCTPKSLAPISSSHRKEIFQLFWRN) the chain is Cytoplasmic. A lipid anchor (S-palmitoyl cysteine) is attached at Cys329.

Belongs to the G-protein coupled receptor 1 family. Bradykinin receptor subfamily. BDKRB1 sub-subfamily.

The protein resides in the cell membrane. In terms of biological role, this is a receptor for bradykinin. Could be a factor in chronic pain and inflammation. In Chlorocebus pygerythrus (Vervet monkey), this protein is B1 bradykinin receptor (BDKRB1).